A 162-amino-acid polypeptide reads, in one-letter code: UPF0114 protein Shewmr4_0646 (162 aa).

The next 4 membrane-spanning stretches (helical) occupy residues 15–35 (IMAPIYLGLSLVLLGLGIKFF), 53–73 (LVLVTLSLIDITLVGGLIVMV), 108–128 (KVAASIVAISSIHLLKIFMDV), and 136–156 (IMWYLLIHITFVVSAFAMGYL).

This sequence belongs to the UPF0114 family.

The protein localises to the cell membrane. The protein is UPF0114 protein Shewmr4_0646 of Shewanella sp. (strain MR-4).